A 257-amino-acid chain; its full sequence is Uracil phosphoribosyltransferase homolog (257 aa).

Residues Arg81, Arg90, and 124–127 each bind GTP; that span reads EKGN. A 5-phospho-alpha-D-ribose 1-diphosphate-binding site is contributed by Arg134. GTP is bound by residues Arg151 and Arg180. 5-phospho-alpha-D-ribose 1-diphosphate is bound at residue 186–194; that stretch reads YPILSTGNT. 247-249 contributes to the uracil binding site; sequence THF.

It belongs to the UPRTase family.

It is found in the cytoplasm. The protein localises to the nucleus. This chain is Uracil phosphoribosyltransferase homolog (uprt), found in Danio rerio (Zebrafish).